Here is a 280-residue protein sequence, read N- to C-terminus: Eukaryotic translation initiation factor 3 subunit F-1 (280 aa).

In terms of domain architecture, MPN spans Val-8 to Gly-138.

The protein belongs to the eIF-3 subunit F family. Component of the eukaryotic translation initiation factor 3 (eIF-3) complex. The eIF-3 complex interacts with pix.

It localises to the cytoplasm. Component of the eukaryotic translation initiation factor 3 (eIF-3) complex, which is involved in protein synthesis of a specialized repertoire of mRNAs and, together with other initiation factors, stimulates binding of mRNA and methionyl-tRNAi to the 40S ribosome. The eIF-3 complex specifically targets and initiates translation of a subset of mRNAs involved in cell proliferation. This Drosophila yakuba (Fruit fly) protein is Eukaryotic translation initiation factor 3 subunit F-1.